A 520-amino-acid chain; its full sequence is Maturase K (520 aa).

This sequence belongs to the intron maturase 2 family. MatK subfamily.

The protein localises to the plastid. It is found in the chloroplast. Usually encoded in the trnK tRNA gene intron. Probably assists in splicing its own and other chloroplast group II introns. In Maianthemum dilatatum (False lily-of-the-valley), this protein is Maturase K.